Reading from the N-terminus, the 171-residue chain is Peptide deformylase (171 aa).

Fe cation contacts are provided by cysteine 91 and histidine 133. The active site involves glutamate 134. Histidine 137 contacts Fe cation.

Belongs to the polypeptide deformylase family. Requires Fe(2+) as cofactor.

The catalysed reaction is N-terminal N-formyl-L-methionyl-[peptide] + H2O = N-terminal L-methionyl-[peptide] + formate. In terms of biological role, removes the formyl group from the N-terminal Met of newly synthesized proteins. Requires at least a dipeptide for an efficient rate of reaction. N-terminal L-methionine is a prerequisite for activity but the enzyme has broad specificity at other positions. The sequence is that of Peptide deformylase from Hamiltonella defensa subsp. Acyrthosiphon pisum (strain 5AT).